Reading from the N-terminus, the 324-residue chain is Glyoxylate/hydroxypyruvate reductase B (324 aa).

Active-site residues include arginine 237 and glutamate 266. Residue histidine 285 is the Proton donor of the active site.

It belongs to the D-isomer specific 2-hydroxyacid dehydrogenase family. GhrB subfamily. As to quaternary structure, homodimer.

The protein resides in the cytoplasm. The enzyme catalyses glycolate + NADP(+) = glyoxylate + NADPH + H(+). It carries out the reaction (R)-glycerate + NAD(+) = 3-hydroxypyruvate + NADH + H(+). The catalysed reaction is (R)-glycerate + NADP(+) = 3-hydroxypyruvate + NADPH + H(+). Catalyzes the NADPH-dependent reduction of glyoxylate and hydroxypyruvate into glycolate and glycerate, respectively. This is Glyoxylate/hydroxypyruvate reductase B from Escherichia coli (strain ATCC 8739 / DSM 1576 / NBRC 3972 / NCIMB 8545 / WDCM 00012 / Crooks).